The following is a 453-amino-acid chain: uncharacterized protein (453 aa).

The first 23 residues, 1 to 23 (MFLLQRFFIYGLFLACFYTTVFG), serve as a signal peptide directing secretion. Over 24-137 (EKHFEAEEYR…EKQFSYSSGT (114 aa)) the chain is Lumenal. Residues 138-158 (NGILATFLTAIPPNIFILLVP) form a helical membrane-spanning segment. Residues 159 to 165 (KSFDTSM) lie on the Cytoplasmic side of the membrane. The helical transmembrane segment at 166-186 (LNLFVAVSAGSLLGDVFLQLL) threads the bilayer. Residues 187-194 (PTVYSTNG) are Lumenal-facing. The chain crosses the membrane as a helical span at residues 195 to 215 (GDFPASSVYSILIGALVFFLM). Residues 216–358 (DKGIRILIHE…LRNGYTKSQV (143 aa)) lie on the Cytoplasmic side of the membrane. The span at 229-238 (SLSKPKKDGE) shows a compositional bias: basic and acidic residues. The segment at 229–278 (SLSKPKKDGEETSSVNKPSASSTQTDVKGVEGLRKRNVKDDQNSKGHEPD) is disordered. A compositionally biased stretch (polar residues) spans 240-254 (TSSVNKPSASSTQTD). Over residues 256–278 (KGVEGLRKRNVKDDQNSKGHEPD) the composition is skewed to basic and acidic residues. The chain crosses the membrane as a helical span at residues 359–379 (LVLQMITMVTGLLGAIVATYI). The Lumenal portion of the chain corresponds to 380–399 (YTASSSSSPYGSFLLQLEDK). The chain crosses the membrane as a helical span at residues 400 to 420 (LLPFTAGGFLYIAYLGVFPEL). Residues 421-432 (LEINLSKGKLGN) are Cytoplasmic-facing. The chain crosses the membrane as a helical span at residues 433–453 (MIYTALYMMFIVGGFSFLYYV).

Belongs to the ZIP transporter (TC 2.A.5) family. KE4/Catsup subfamily.

The protein localises to the endoplasmic reticulum membrane. This is an uncharacterized protein from Schizosaccharomyces pombe (strain 972 / ATCC 24843) (Fission yeast).